Consider the following 209-residue polypeptide: Ion-translocating oxidoreductase complex subunit G (209 aa).

Residues 1–8 (MLTAIRKN) lie on the Cytoplasmic side of the membrane. A helical membrane pass occupies residues 9–29 (GLILAVFACVSTGLVALTYAL). The Periplasmic portion of the chain corresponds to 30 to 209 (TAEQIQQQEQ…HNQPNPCEGQ (180 aa)). FMN phosphoryl threonine is present on T175.

This sequence belongs to the RnfG family. As to quaternary structure, the complex is composed of six subunits: RnfA, RnfB, RnfC, RnfD, RnfE and RnfG. The cofactor is FMN.

It localises to the cell inner membrane. Functionally, part of a membrane-bound complex that couples electron transfer with translocation of ions across the membrane. The chain is Ion-translocating oxidoreductase complex subunit G from Vibrio cholerae serotype O1 (strain ATCC 39541 / Classical Ogawa 395 / O395).